Reading from the N-terminus, the 815-residue chain is Lon protease 2 (815 aa).

One can recognise a Lon N-terminal domain in the interval 19–212 (LPVLPLINTV…RLSVVLSQEI (194 aa)). 365-372 (GPPGVGKT) provides a ligand contact to ATP. A Lon proteolytic domain is found at 601–782 (RDEIGVATGM…DEVLPIAFVS (182 aa)). Residues Ser-688 and Lys-731 contribute to the active site.

The protein belongs to the peptidase S16 family. In terms of assembly, homohexamer. Organized in a ring with a central cavity.

It is found in the cytoplasm. The catalysed reaction is Hydrolysis of proteins in presence of ATP.. Its function is as follows. ATP-dependent serine protease that mediates the selective degradation of mutant and abnormal proteins as well as certain short-lived regulatory proteins. Required for cellular homeostasis and for survival from DNA damage and developmental changes induced by stress. Degrades polypeptides processively to yield small peptide fragments that are 5 to 10 amino acids long. Binds to DNA in a double-stranded, site-specific manner. This is Lon protease 2 from Herpetosiphon aurantiacus (strain ATCC 23779 / DSM 785 / 114-95).